The chain runs to 272 residues: Hydroxyethylthiazole kinase (272 aa).

Substrate is bound at residue M45. Residues R121 and T168 each coordinate ATP. Residue G195 coordinates substrate.

The protein belongs to the Thz kinase family. Homotrimer. It depends on Mg(2+) as a cofactor.

The enzyme catalyses 5-(2-hydroxyethyl)-4-methylthiazole + ATP = 4-methyl-5-(2-phosphooxyethyl)-thiazole + ADP + H(+). The protein operates within cofactor biosynthesis; thiamine diphosphate biosynthesis; 4-methyl-5-(2-phosphoethyl)-thiazole from 5-(2-hydroxyethyl)-4-methylthiazole: step 1/1. In terms of biological role, catalyzes the phosphorylation of the hydroxyl group of 4-methyl-5-beta-hydroxyethylthiazole (THZ). The chain is Hydroxyethylthiazole kinase from Bacillus subtilis (strain 168).